The sequence spans 227 residues: H-2 class II histocompatibility antigen, A-U alpha chain (227 aa).

The alpha-1 stretch occupies residues 1–82 (DHVGSYGIVV…KRSNSTPATN (82 aa)). Residues 1–189 (DHVGSYGIVV…IPAPMSELTE (189 aa)) lie on the Extracellular side of the membrane. Residues 83 to 176 (EAPQATVFPK…GLEEPVLKHW (94 aa)) are alpha-2. In terms of domain architecture, Ig-like C1-type spans 85 to 177 (PQATVFPKSP…LEEPVLKHWE (93 aa)). Cys-105 and Cys-161 form a disulfide bridge. The N-linked (GlcNAc...) asparagine glycan is linked to Asn-116. Residues 177–189 (EPEIPAPMSELTE) form a connecting peptide region. Residues 190–215 (TVVCALGLSVGLVGIVVGTIFIIQGL) traverse the membrane as a helical segment. Residues 216 to 227 (RSGGTSRHPGPL) lie on the Cytoplasmic side of the membrane.

Belongs to the MHC class II family.

Its subcellular location is the membrane. The chain is H-2 class II histocompatibility antigen, A-U alpha chain (H2-Aa) from Mus musculus (Mouse).